The primary structure comprises 522 residues: Stellatic acid synthase (522 aa).

Residues isoleucine 23–valine 43 traverse the membrane as a helical segment. N-linked (GlcNAc...) asparagine glycosylation is found at asparagine 267 and asparagine 451. Heme is bound at residue cysteine 464. Residue asparagine 495 is glycosylated (N-linked (GlcNAc...) asparagine).

This sequence belongs to the cytochrome P450 family. It depends on heme as a cofactor.

It is found in the membrane. It carries out the reaction stellata-2,6,19-triene + 3 reduced [NADPH--hemoprotein reductase] + 3 O2 = stellatate + 3 oxidized [NADPH--hemoprotein reductase] + 4 H2O + 4 H(+). It participates in secondary metabolite biosynthesis; terpenoid biosynthesis. Its function is as follows. Cytochrome P450 monooxygenase; part of the gene cluster that mediates the biosynthesis of the sesterterpene stellatic acid. The first step in the pathway is performed by the stellatatriene synthase that possesses both prenyl transferase and terpene cyclase activity, converting isopentenyl diphosphate and dimethylallyl diphosphate into geranylgeranyl diphosphate (GGDP) and then converting GGDP into stellata-2,6,19-triene. The cytochrome P450 monooxygenase Stl-P450 then catalyzes three successive oxidation reactions on the C-20 methyl group to generate the carboxylic acid of stellatic acid. The chain is Stellatic acid synthase from Emericella variicolor (Aspergillus stellatus).